The following is a 352-amino-acid chain: Type II restriction enzyme HaeII (352 aa).

It catalyses the reaction Endonucleolytic cleavage of DNA to give specific double-stranded fragments with terminal 5'-phosphates.. A P subtype restriction enzyme that recognizes the double-stranded sequence 5'-RGCGCY-3' and cleaves after C-5. This is Type II restriction enzyme HaeII (haeIIR) from Haemophilus aegyptius.